Consider the following 323-residue polypeptide: uncharacterized protein (323 aa).

A disordered region spans residues Met-1–Asn-21. Gly-2 carries the N-myristoyl glycine; by host lipid modification.

This is an uncharacterized protein from Acanthamoeba polyphaga (Amoeba).